A 156-amino-acid chain; its full sequence is 6,7-dimethyl-8-ribityllumazine synthase (156 aa).

Residues Phe-23, 57–59 (AYE), and 81–83 (AII) contribute to the 5-amino-6-(D-ribitylamino)uracil site. 86 to 87 (GT) contributes to the (2S)-2-hydroxy-3-oxobutyl phosphate binding site. The active-site Proton donor is the His-89. Phe-114 contributes to the 5-amino-6-(D-ribitylamino)uracil binding site. Residue Arg-128 participates in (2S)-2-hydroxy-3-oxobutyl phosphate binding.

The protein belongs to the DMRL synthase family.

It catalyses the reaction (2S)-2-hydroxy-3-oxobutyl phosphate + 5-amino-6-(D-ribitylamino)uracil = 6,7-dimethyl-8-(1-D-ribityl)lumazine + phosphate + 2 H2O + H(+). Its pathway is cofactor biosynthesis; riboflavin biosynthesis; riboflavin from 2-hydroxy-3-oxobutyl phosphate and 5-amino-6-(D-ribitylamino)uracil: step 1/2. Catalyzes the formation of 6,7-dimethyl-8-ribityllumazine by condensation of 5-amino-6-(D-ribitylamino)uracil with 3,4-dihydroxy-2-butanone 4-phosphate. This is the penultimate step in the biosynthesis of riboflavin. The protein is 6,7-dimethyl-8-ribityllumazine synthase of Helicobacter pylori (strain G27).